Here is a 139-residue protein sequence, read N- to C-terminus: Large ribosomal subunit protein uL22c (139 aa).

This sequence belongs to the universal ribosomal protein uL22 family. In terms of assembly, part of the 50S ribosomal subunit.

The protein localises to the plastid. Its subcellular location is the chloroplast. Functionally, this protein binds specifically to 23S rRNA. In terms of biological role, the globular domain of the protein is located near the polypeptide exit tunnel on the outside of the subunit, while an extended beta-hairpin is found that lines the wall of the exit tunnel in the center of the 70S ribosome. The protein is Large ribosomal subunit protein uL22c (rpl22) of Cycas taitungensis (Prince sago).